The chain runs to 615 residues: Prickle planar cell polarity protein 3 (615 aa).

Positions 1–12 (MFARGSRRRRSG) are enriched in basic residues. Residues 1–26 (MFARGSRRRRSGRAPPEAEDPDRGQP) are disordered. In terms of domain architecture, PET spans 74-182 (SDFQRHSISD…IVRIFPVTIT (109 aa)). LIM zinc-binding domains are found at residues 184–249 (AICE…CLRP), 250–309 (RCQA…RHAE), and 310–373 (YCDG…SEPT). Disordered regions lie at residues 396 to 567 (ASFS…LGER) and 587 to 615 (TFNS…CIVA). Over residues 405-415 (SETTTKGTSTE) the composition is skewed to polar residues. Phosphoserine is present on residues S475 and S491. Residues 508–531 (PSRRRHHHHNHHHHHNRHPSRRRH) are compositionally biased toward basic residues. Residues 537-555 (GSGSDSESCSSSPSSSSSE) show a composition bias toward low complexity. Positions 606–615 (QARDKNCIVA) are enriched in basic and acidic residues.

This sequence belongs to the prickle / espinas / testin family. In terms of assembly, interacts with VANGL2 via its C-terminus. The VANGL2-dependent membrane recruitment of PRICKLE3 is a prerequisite for its polarization. Interacts with WTIP. WTIP is involved in the recruitment of PRICKLE3 to the basal body. Interacts with MT-ATP8, a component of the mitochondrial complex V. In terms of tissue distribution, widely expressed.

It is found in the cytoplasm. It localises to the cell membrane. The protein resides in the mitochondrion. Functionally, involved in the planar cell polarity (PCP) pathway that is essential for the polarization of epithelial cells during morphogenetic processes, including gastrulation and neurulation. PCP is maintained by two molecular modules, the global and the core modules, PRICKLE3 being part of the core module. Distinct complexes of the core module segregate to opposite sides of the cell, where they interact with the opposite complex in the neighboring cell at or near the adherents junctions. Involved in the organization of the basal body. Involved in cilia growth and positioning. Required for proper assembly, stability, and function of mitochondrial membrane ATP synthase (mitochondrial complex V). The chain is Prickle planar cell polarity protein 3 from Homo sapiens (Human).